Here is a 361-residue protein sequence, read N- to C-terminus: Diacylglycerol O-acyltransferase 2 (361 aa).

The Cytoplasmic portion of the chain corresponds to 1–42 (MKTIIAAYSGVLRGTGSSLLSAVHDLPNIPWLSKSSVVRHLQ). Residues 43 to 61 (IISVLQWVLSFLILGVACT) traverse the membrane as a helical segment. At 62 to 65 (AVLV) the chain is on the lumenal side. A helical membrane pass occupies residues 66 to 85 (YIFCTDLWLIAALYLTWMVL). Topologically, residues 86-361 (DWNTPYKGGR…LHDSEMLEIV (276 aa)) are cytoplasmic.

Belongs to the diacylglycerol acyltransferase family.

It is found in the endoplasmic reticulum membrane. It localises to the lipid droplet. The protein localises to the cytoplasm. The protein resides in the perinuclear region. The catalysed reaction is an acyl-CoA + a 1,2-diacyl-sn-glycerol = a triacyl-sn-glycerol + CoA. It carries out the reaction all-trans-retinol + an acyl-CoA = an all-trans-retinyl ester + CoA. It catalyses the reaction 2-(9Z-octadecenoyl)-glycerol + (9Z)-octadecenoyl-CoA = 1,2-di-(9Z-octadecenoyl)-sn-glycerol + CoA. The enzyme catalyses 1,2-di-(9Z-octadecenoyl)-sn-glycerol + (9Z)-octadecenoyl-CoA = 1,2,3-tri-(9Z-octadecenoyl)-glycerol + CoA. The catalysed reaction is all-trans-retinol + hexadecanoyl-CoA = all-trans-retinyl hexadecanoate + CoA. It carries out the reaction 1-O-(9Z-octadecenyl)-glycerol + (9Z)-octadecenoyl-CoA = 1-O-(9Z-octadecyl)-3-(9Z-octadecenoyl)-glycerol + CoA. It catalyses the reaction 1-(9Z-octadecenoyl)-glycerol + (9Z)-octadecenoyl-CoA = 1,2-di-(9Z-octadecenoyl)-glycerol + CoA. The enzyme catalyses 1,2-di-(9Z-octadecenoyl)-sn-glycerol + hexadecanoyl-CoA = 1,2-di-(9Z)-octadecenoyl-3-hexadecanoyl-sn-glycerol + CoA. The catalysed reaction is 1,3-di-(9Z-octadecenoyl)-glycerol + (9Z)-octadecenoyl-CoA = 1,2,3-tri-(9Z-octadecenoyl)-glycerol + CoA. It carries out the reaction 2,3-di-(9Z)-octadecenoyl-sn-glycerol + (9Z)-octadecenoyl-CoA = 1,2,3-tri-(9Z-octadecenoyl)-glycerol + CoA. It catalyses the reaction 2-(9Z-octadecenoyl)-glycerol + hexadecanoyl-CoA = 1-hexadecanoyl-2-(9Z-octadecenoyl)-sn-glycerol + CoA. It participates in glycerolipid metabolism; triacylglycerol biosynthesis. In terms of biological role, essential acyltransferase that catalyzes the terminal and only committed step in triacylglycerol synthesis by using diacylglycerol and fatty acyl CoA as substrates. Required for synthesis and storage of intracellular triglycerides. Probably plays a central role in cytosolic lipid accumulation. This is Diacylglycerol O-acyltransferase 2 (dgat2) from Xenopus tropicalis (Western clawed frog).